The chain runs to 842 residues: Leucine--tRNA ligase (842 aa).

A 'HIGH' region motif is present at residues 44 to 55 (PYPSANGLHVGH). The 'KMSKS' region signature appears at 619 to 623 (KMSKS). Position 622 (K622) interacts with ATP.

It belongs to the class-I aminoacyl-tRNA synthetase family.

The protein resides in the cytoplasm. It carries out the reaction tRNA(Leu) + L-leucine + ATP = L-leucyl-tRNA(Leu) + AMP + diphosphate. This Borrelia turicatae (strain 91E135) protein is Leucine--tRNA ligase.